The chain runs to 159 residues: Large ribosomal subunit protein uL15 (159 aa).

The segment covering 1–13 (MRIHEVTPKEGST) has biased composition (basic and acidic residues). Residues 1–51 (MRIHEVTPKEGSTKRRRRVGRGISAGQGASCGFGMRGQKSRSGTGTKAGFE) are disordered. Residues 23 to 35 (ISAGQGASCGFGM) show a composition bias toward gly residues.

Belongs to the universal ribosomal protein uL15 family. As to quaternary structure, part of the 50S ribosomal subunit.

Binds to the 23S rRNA. In Rippkaea orientalis (strain PCC 8801 / RF-1) (Cyanothece sp. (strain PCC 8801)), this protein is Large ribosomal subunit protein uL15.